A 693-amino-acid polypeptide reads, in one-letter code: MDKSIPIKAIPVACVRPDLVDDVTKNTSTIPTMVSPVLTNMPSATSPLLMVPPLRTIWPSNKEWYDGDAGPSSTGPIKREASDNTNDTAHNTFAPPPEMVIPLITIRPSDDSSNYSCDAGAGPSTGPVKRGRGRPKGSKNSTPTEPKKPKVYDPNSLKVTSRGNFDSEITEAETETGNQEIVDSVMMRFDAVRRRLCQINHPEDILTTASGNCTKMGVKTNTRRRIGAVPGIHVGDIFYYWGEMCLVGLHKSNYGGIDFFTAAESAVEGHAAMCVVTAGQYDGETEGLDTLIYSGQGGTDVYGNARDQEMKGGNLALEASVSKGNDVRVVRGVIHPHENNQKIYIYDGMYLVSKFWTVTGKSGFKEFRFKLVRKPNQPPAYAIWKTVENLRNHDLIDSRQGFILEDLSFGAELLRVPLVNEVDEDDKTIPEDFDYIPSQCHSGMMTHEFHFDRQSLGCQNCRHQPCMHQNCTCVQRNGDLLPYHNNILVCRKPLIYECGGSCPCPDHCPTRLVQTGLKLHLEVFKTRNCGWGLRSWDPIRAGTFICEFAGLRKTKEEVEEDDDYLFDTSKIYQRFRWNYEPELLLEDSWEQVSEFINLPTQVLISAKEKGNVGRFMNHSCSPNVFWQPIEYENRGDVYLLIGLFAMKHIPPMTELTYDYGVSCVERSEEDEVLLYKGKKTCLCGSVKCRGSFT.

Disordered stretches follow at residues 64–99 (WYDG…PPEM) and 111–175 (DSSN…AETE). Residues 129-141 (KRGRGRPKGSKNS) constitute a DNA-binding region (a.T hook). The 147-residue stretch at 227 to 373 (GAVPGIHVGD…FKEFRFKLVR (147 aa)) folds into the YDG domain. Residues 454–516 (QSLGCQNCRH…HCPTRLVQTG (63 aa)) form the Pre-SET domain. Zn(2+) is bound by residues cysteine 458, cysteine 461, cysteine 466, cysteine 471, cysteine 473, cysteine 498, cysteine 502, cysteine 504, and cysteine 508. The region spanning 519-660 (LHLEVFKTRN…PMTELTYDYG (142 aa)) is the SET domain. Residues 529–531 (CGW), aspartate 562, tyrosine 564, arginine 614, and 617–618 (NH) each bind S-adenosyl-L-methionine. The Zn(2+) site is built by cysteine 620, cysteine 681, cysteine 683, and cysteine 688. The region spanning 677-693 (GKKTCLCGSVKCRGSFT) is the Post-SET domain.

It belongs to the class V-like SAM-binding methyltransferase superfamily. Histone-lysine methyltransferase family. Suvar3-9 subfamily.

The protein resides in the nucleus. Its subcellular location is the chromosome. The protein localises to the centromere. It carries out the reaction N(6)-methyl-L-lysyl(9)-[histone H3] + S-adenosyl-L-methionine = N(6),N(6)-dimethyl-L-lysyl(9)-[histone H3] + S-adenosyl-L-homocysteine + H(+). The catalysed reaction is L-lysyl(9)-[histone H3] + S-adenosyl-L-methionine = N(6)-methyl-L-lysyl(9)-[histone H3] + S-adenosyl-L-homocysteine + H(+). Functionally, histone methyltransferase. Methylates 'Lys-9' of histone H3. H3 'Lys-9' methylation represents a specific tag for epigenetic transcriptional repression. In Arabidopsis thaliana (Mouse-ear cress), this protein is Histone-lysine N-methyltransferase, H3 lysine-9 specific SUVH7 (SUVH7).